The following is a 325-amino-acid chain: Beta-ketoacyl-[acyl-carrier-protein] synthase III (325 aa).

Residues Cys119 and His252 contribute to the active site. Residues 253–257 are ACP-binding; the sequence is QANIR. Asn282 is a catalytic residue.

It belongs to the thiolase-like superfamily. FabH family. Homodimer.

Its subcellular location is the cytoplasm. The enzyme catalyses malonyl-[ACP] + acetyl-CoA + H(+) = 3-oxobutanoyl-[ACP] + CO2 + CoA. It participates in lipid metabolism; fatty acid biosynthesis. Its function is as follows. Catalyzes the condensation reaction of fatty acid synthesis by the addition to an acyl acceptor of two carbons from malonyl-ACP. Catalyzes the first condensation reaction which initiates fatty acid synthesis and may therefore play a role in governing the total rate of fatty acid production. Possesses both acetoacetyl-ACP synthase and acetyl transacylase activities. Its substrate specificity determines the biosynthesis of branched-chain and/or straight-chain of fatty acids. This chain is Beta-ketoacyl-[acyl-carrier-protein] synthase III, found in Delftia acidovorans (strain DSM 14801 / SPH-1).